Consider the following 275-residue polypeptide: Polyamine aminopropyltransferase (275 aa).

Residues glutamate 2–lysine 235 form the PABS domain. Position 31 (glutamine 31) interacts with S-methyl-5'-thioadenosine. Residues histidine 62 and aspartate 86 each contribute to the spermidine site. Residues glutamate 106 and aspartate 137 to glycine 138 each bind S-methyl-5'-thioadenosine. Aspartate 155 serves as the catalytic Proton acceptor. Spermidine is bound at residue aspartate 155–glutamate 158. An S-methyl-5'-thioadenosine-binding site is contributed by proline 162.

This sequence belongs to the spermidine/spermine synthase family. As to quaternary structure, homodimer or homotetramer.

The protein localises to the cytoplasm. It carries out the reaction S-adenosyl 3-(methylsulfanyl)propylamine + putrescine = S-methyl-5'-thioadenosine + spermidine + H(+). The protein operates within amine and polyamine biosynthesis; spermidine biosynthesis; spermidine from putrescine: step 1/1. In terms of biological role, catalyzes the irreversible transfer of a propylamine group from the amino donor S-adenosylmethioninamine (decarboxy-AdoMet) to putrescine (1,4-diaminobutane) to yield spermidine. In Bacillus cytotoxicus (strain DSM 22905 / CIP 110041 / 391-98 / NVH 391-98), this protein is Polyamine aminopropyltransferase.